The primary structure comprises 262 residues: Ribose-5-phosphate isomerase A (262 aa).

Substrate is bound by residues 33–36 (TGST), 89–92 (DGAD), and 102–105 (KGGG). Catalysis depends on Glu111, which acts as the Proton acceptor. Lys129 is a binding site for substrate.

This sequence belongs to the ribose 5-phosphate isomerase family. In terms of assembly, homodimer.

It catalyses the reaction aldehydo-D-ribose 5-phosphate = D-ribulose 5-phosphate. It participates in carbohydrate degradation; pentose phosphate pathway; D-ribose 5-phosphate from D-ribulose 5-phosphate (non-oxidative stage): step 1/1. Catalyzes the reversible conversion of ribose-5-phosphate to ribulose 5-phosphate. The sequence is that of Ribose-5-phosphate isomerase A from Cereibacter sphaeroides (strain ATCC 17029 / ATH 2.4.9) (Rhodobacter sphaeroides).